Reading from the N-terminus, the 208-residue chain is Large ribosomal subunit protein uL3 (208 aa).

The disordered stretch occupies residues 134 to 153; sequence SKFHREAGSTGQCTSPGRTF.

It belongs to the universal ribosomal protein uL3 family. As to quaternary structure, part of the 50S ribosomal subunit. Forms a cluster with proteins L14 and L19.

In terms of biological role, one of the primary rRNA binding proteins, it binds directly near the 3'-end of the 23S rRNA, where it nucleates assembly of the 50S subunit. The sequence is that of Large ribosomal subunit protein uL3 from Treponema pallidum (strain Nichols).